Consider the following 323-residue polypeptide: Fructose-1,6-bisphosphatase class 1 (323 aa).

Mg(2+) contacts are provided by E90, D111, L113, and D114. Substrate is bound by residues 114–117, Y222, and K253; that span reads DGSS. E259 is a Mg(2+) binding site.

The protein belongs to the FBPase class 1 family. Homotetramer. Requires Mg(2+) as cofactor.

It localises to the cytoplasm. The enzyme catalyses beta-D-fructose 1,6-bisphosphate + H2O = beta-D-fructose 6-phosphate + phosphate. It participates in carbohydrate biosynthesis; gluconeogenesis. In Pelobacter propionicus (strain DSM 2379 / NBRC 103807 / OttBd1), this protein is Fructose-1,6-bisphosphatase class 1.